Here is a 321-residue protein sequence, read N- to C-terminus: MITRLFENDKQLEGFFSSLDKKKKYLLALSGGSDSLFLMYLLKSRAIFFTAVHVDYGWRETSYQEASDLAALCEQEQIPFILDRPEATDPMDSRDIENAARRYRYELFYRLCKEKCFSGVFLGHHADDQAETILKRVFEGAHLGNLKGMSAQVMYRDVALLRPLLHIPKHKIVEALDSHQVQYVQDITNCNERFLRARMRERLFPYLQDVFGKNIRDPLLSLAGDSAELREYLDQQTAPFLLRVVDNERGKLLPIEQELLKTSFLAKWVCKQFFLNERLVASKSFLQTVYDHLMTGSTARLRLRNRTVLVKARGVIIESIY.

Residue 30–35 (SGGSDS) participates in ATP binding.

It belongs to the tRNA(Ile)-lysidine synthase family.

The protein localises to the cytoplasm. The enzyme catalyses cytidine(34) in tRNA(Ile2) + L-lysine + ATP = lysidine(34) in tRNA(Ile2) + AMP + diphosphate + H(+). Its function is as follows. Ligates lysine onto the cytidine present at position 34 of the AUA codon-specific tRNA(Ile) that contains the anticodon CAU, in an ATP-dependent manner. Cytidine is converted to lysidine, thus changing the amino acid specificity of the tRNA from methionine to isoleucine. In Chlamydia trachomatis serovar D (strain ATCC VR-885 / DSM 19411 / UW-3/Cx), this protein is tRNA(Ile)-lysidine synthase.